We begin with the raw amino-acid sequence, 327 residues long: Immediate early response gene 5 protein (327 aa).

Disordered stretches follow at residues 59–166 (GPAG…GVFP) and 227–313 (GPAG…DKPV). The segment covering 71–84 (QPGEPAAGPPAGWG) has biased composition (low complexity). Acidic residues predominate over residues 253–262 (GEDDDAEEME). Positions 265-278 (NVANLISIFGSSFS) are enriched in polar residues.

This sequence belongs to the IER family. As to quaternary structure, monomer. Homodimer. Associates with the catalytic subunit of protein phosphatase PP2A. Interacts (via N- and C-terminal regions) with PPP2R2B. Interacts with PPP2R2A, PPP2R2C and PPP2R2D. Interacts (via N-terminus) with RPS6KB1. Interacts (via central region) with HSF1; this interaction promotes PPP2CA-induced HSF1 dephosphorylation, leading to enhanced HSF1 transcriptional activity. As to expression, expressed in acute myeloid leukemia (AML) cells.

The protein localises to the nucleus. It localises to the cytoplasm. Functionally, plays a role as a transcription factor. Mediates positive transcriptional regulation of several chaperone genes during the heat shock response in a HSF1-dependent manner. Mediates negative transcriptional regulation of CDC25B expression. Plays a role in the dephosphorylation of the heat shock factor HSF1 and ribosomal protein S6 kinase (S6K) by the protein phosphatase PP2A. Involved in the regulation of cell proliferation and resistance to thermal stress. Involved in the cell cycle checkpoint and survival in response to ionizing radiation. Associates with chromatin to the CDC25B promoter. This chain is Immediate early response gene 5 protein (IER5), found in Homo sapiens (Human).